The chain runs to 340 residues: Heat-inducible transcription repressor HrcA (340 aa).

It belongs to the HrcA family.

In terms of biological role, negative regulator of class I heat shock genes (grpE-dnaK-dnaJ and groELS operons). Prevents heat-shock induction of these operons. In Mycoplasma capricolum subsp. capricolum (strain California kid / ATCC 27343 / NCTC 10154), this protein is Heat-inducible transcription repressor HrcA.